The sequence spans 500 residues: NAD(P)H-quinone oxidoreductase chain 4, chloroplastic (500 aa).

14 consecutive transmembrane segments (helical) span residues 4–24 (FPWLTIIVVLPISAGSLIFFL), 37–57 (ICICVLELLLTTYAFCYHFQL), 87–107 (IGPILLTGFITTLATLAAWPV), 113–130 (LFHFLMLAMYSGQIGSFS), 134–154 (LLLFFLMWELELIPVYLLLSM), 167–187 (FILYTAGGSIFLLIGVLGIGL), 207–227 (IALEIIFYIGFLIAFAVKSPI), 242–262 (HYSTCMLLAGILLKMGAYGLV), 272–292 (AHSLFSPWLVVVGTMQIIYAA), 305–325 (IAYSSVSHMGFIIIGIGSITD), 330–350 (GAILQIVSHGFIGAALFFLAG), 386–406 (LALPGMSGFVAELIVFFGIIT), 411–431 (FLMAKILITFVMAIGMILTPI), and 462–482 (LFVSISILLPVIGIGIYPDFL).

Belongs to the complex I subunit 4 family.

The protein resides in the plastid. It is found in the chloroplast thylakoid membrane. The catalysed reaction is a plastoquinone + NADH + (n+1) H(+)(in) = a plastoquinol + NAD(+) + n H(+)(out). The enzyme catalyses a plastoquinone + NADPH + (n+1) H(+)(in) = a plastoquinol + NADP(+) + n H(+)(out). The chain is NAD(P)H-quinone oxidoreductase chain 4, chloroplastic from Carica papaya (Papaya).